We begin with the raw amino-acid sequence, 108 residues long: DNA-directed RNA polymerase subunit omega (108 aa).

The tract at residues 1–32 is disordered; sequence MTNSQSDAALAAVPDRFDPSAGGPGAYDTPLG.

It belongs to the RNA polymerase subunit omega family. The RNAP catalytic core consists of 2 alpha, 1 beta, 1 beta' and 1 omega subunit. When a sigma factor is associated with the core the holoenzyme is formed, which can initiate transcription.

The enzyme catalyses RNA(n) + a ribonucleoside 5'-triphosphate = RNA(n+1) + diphosphate. Promotes RNA polymerase assembly. Latches the N- and C-terminal regions of the beta' subunit thereby facilitating its interaction with the beta and alpha subunits. The chain is DNA-directed RNA polymerase subunit omega from Mycobacterium avium (strain 104).